A 576-amino-acid polypeptide reads, in one-letter code: Alpha-bisabolol synthase (576 aa).

Residues Arg-286, Asp-323, Asp-327, Arg-466, and Asn-469 each contribute to the (2E,6E)-farnesyl diphosphate site. Residues Asp-323 and Asp-327 each contribute to the Mg(2+) site. The DDXXD motif signature appears at 323–327; the sequence is DDVYD. Mg(2+) contacts are provided by Asn-469, Thr-473, and Glu-477.

Belongs to the terpene synthase family. Tpsb subfamily. Requires Mg(2+) as cofactor. Mn(2+) is required as a cofactor.

Its function is as follows. Produces a mixture of beta-bisabolene and alpha-bisabolol, along with traces of alpha-bisabolene and farnesene isomers from (2E,6E)-farnesyl diphosphate in fragrance biosynthesis. In Santalum spicatum (Australian sandalwood), this protein is Alpha-bisabolol synthase.